Consider the following 366-residue polypeptide: Galactose-1-phosphate uridylyltransferase (366 aa).

Position 27 is a phosphoserine (Ser27). Zn(2+)-binding residues include Cys54 and Cys57. Residues Ala63 and 79–80 contribute to the UDP-alpha-D-glucose site; that span reads ND. His124 contributes to the Zn(2+) binding site. Residue Asn169 coordinates UDP-alpha-D-glucose. His180 serves as a coordination point for Zn(2+). His182 (tele-UMP-histidine intermediate) is an active-site residue. UDP-alpha-D-glucose is bound at residue Gln184. Positions 198, 297, 314, and 316 each coordinate Fe cation. Residues 329-332 and 334-335 each bind UDP-alpha-D-glucose; these read KFLV and FE.

It belongs to the galactose-1-phosphate uridylyltransferase type 1 family. Homodimer. The cofactor is Zn(2+).

It carries out the reaction alpha-D-galactose 1-phosphate + UDP-alpha-D-glucose = alpha-D-glucose 1-phosphate + UDP-alpha-D-galactose. It participates in carbohydrate metabolism; galactose metabolism. This chain is Galactose-1-phosphate uridylyltransferase (GAL7), found in Saccharomyces cerevisiae (strain ATCC 204508 / S288c) (Baker's yeast).